A 492-amino-acid chain; its full sequence is Cytochrome P450 2A1 (492 aa).

The residue at position 130 (serine 130) is a Phosphoserine. Cysteine 437 contacts heme.

It belongs to the cytochrome P450 family. The cofactor is heme. As to expression, liver and testis.

The protein localises to the endoplasmic reticulum membrane. Its subcellular location is the microsome membrane. It carries out the reaction an organic molecule + reduced [NADPH--hemoprotein reductase] + O2 = an alcohol + oxidized [NADPH--hemoprotein reductase] + H2O + H(+). Functionally, highly active in the 7-alpha-hydroxylation of testosterone, progesterone and androstenedione. The chain is Cytochrome P450 2A1 (Cyp2a1) from Rattus norvegicus (Rat).